Here is a 464-residue protein sequence, read N- to C-terminus: L-2-hydroxyglutarate dehydrogenase, mitochondrial (464 aa).

The N-terminal 52 residues, 1 to 52 (MWPTLRYVGGVCGLARYCVAGGFLRASGPASGVPGLLCGGGRRSSSTSSFDI), are a transit peptide targeting the mitochondrion. An N6-acetyllysine mark is found at Lys105 and Lys174.

It belongs to the L2HGDH family. FAD serves as cofactor.

Its subcellular location is the mitochondrion. The enzyme catalyses (S)-2-hydroxyglutarate + A = 2-oxoglutarate + AH2. The protein is L-2-hydroxyglutarate dehydrogenase, mitochondrial (L2hgdh) of Mus musculus (Mouse).